The primary structure comprises 86 residues: Co-chaperonin GroES (86 aa).

The protein belongs to the GroES chaperonin family. In terms of assembly, heptamer of 7 subunits arranged in a ring. Interacts with the chaperonin GroEL.

The protein resides in the cytoplasm. Together with the chaperonin GroEL, plays an essential role in assisting protein folding. The GroEL-GroES system forms a nano-cage that allows encapsulation of the non-native substrate proteins and provides a physical environment optimized to promote and accelerate protein folding. GroES binds to the apical surface of the GroEL ring, thereby capping the opening of the GroEL channel. This chain is Co-chaperonin GroES, found in Campylobacter lari (strain RM2100 / D67 / ATCC BAA-1060).